The following is a 351-amino-acid chain: Phospho-N-acetylmuramoyl-pentapeptide-transferase (351 aa).

A run of 10 helical transmembrane segments spans residues 17–37 (MAYA…HIIL), 62–82 (GIPT…LVFW), 85–105 (ILNV…FLGF), 124–144 (FKIY…YYFG), 161–181 (IDLG…ASNS), 190–210 (GLAI…AYLT), 230–250 (LVIF…FNAY), 254–274 (IMMG…AALI), 279–299 (ILFS…IIQV), and 328–348 (QVVI…LSTI).

This sequence belongs to the glycosyltransferase 4 family. MraY subfamily. Mg(2+) is required as a cofactor.

Its subcellular location is the cell inner membrane. The catalysed reaction is UDP-N-acetyl-alpha-D-muramoyl-L-alanyl-gamma-D-glutamyl-meso-2,6-diaminopimeloyl-D-alanyl-D-alanine + di-trans,octa-cis-undecaprenyl phosphate = di-trans,octa-cis-undecaprenyl diphospho-N-acetyl-alpha-D-muramoyl-L-alanyl-D-glutamyl-meso-2,6-diaminopimeloyl-D-alanyl-D-alanine + UMP. It participates in cell wall biogenesis; peptidoglycan biosynthesis. Its function is as follows. Catalyzes the initial step of the lipid cycle reactions in the biosynthesis of the cell wall peptidoglycan: transfers peptidoglycan precursor phospho-MurNAc-pentapeptide from UDP-MurNAc-pentapeptide onto the lipid carrier undecaprenyl phosphate, yielding undecaprenyl-pyrophosphoryl-MurNAc-pentapeptide, known as lipid I. This is Phospho-N-acetylmuramoyl-pentapeptide-transferase from Borrelia garinii subsp. bavariensis (strain ATCC BAA-2496 / DSM 23469 / PBi) (Borreliella bavariensis).